A 214-amino-acid polypeptide reads, in one-letter code: Ribonuclease P protein component 3 (214 aa).

Belongs to the eukaryotic/archaeal RNase P protein component 3 family. As to quaternary structure, consists of a catalytic RNA component and at least 4-5 protein subunits. Forms a subcomplex with Rnp2 which stimulates the catalytic RNA.

It localises to the cytoplasm. It catalyses the reaction Endonucleolytic cleavage of RNA, removing 5'-extranucleotides from tRNA precursor.. Its function is as follows. Part of ribonuclease P, a protein complex that generates mature tRNA molecules by cleaving their 5'-ends. The RNA is catalytic, but its KM for pre-tRNA is 170-fold decreased in the presence of the 4 known protein subunits (Rnp1-4). The protein subunits also decrease the amount of Mg(2+) needed for activity. This Pyrococcus furiosus (strain ATCC 43587 / DSM 3638 / JCM 8422 / Vc1) protein is Ribonuclease P protein component 3.